We begin with the raw amino-acid sequence, 504 residues long: UDP-N-acetylmuramoylalanine--D-glutamate ligase (504 aa).

132-138 (GTNGKTT) lines the ATP pocket. The segment at 284-310 (AQDRDATDEPAPTRRRKSESTAPPDIG) is disordered.

This sequence belongs to the MurCDEF family.

The protein resides in the cytoplasm. The enzyme catalyses UDP-N-acetyl-alpha-D-muramoyl-L-alanine + D-glutamate + ATP = UDP-N-acetyl-alpha-D-muramoyl-L-alanyl-D-glutamate + ADP + phosphate + H(+). Its pathway is cell wall biogenesis; peptidoglycan biosynthesis. Functionally, cell wall formation. Catalyzes the addition of glutamate to the nucleotide precursor UDP-N-acetylmuramoyl-L-alanine (UMA). The polypeptide is UDP-N-acetylmuramoylalanine--D-glutamate ligase (Paraburkholderia phymatum (strain DSM 17167 / CIP 108236 / LMG 21445 / STM815) (Burkholderia phymatum)).